The sequence spans 296 residues: Diaminopimelate epimerase (296 aa).

Residues N11 and N78 each contribute to the substrate site. C87 functions as the Proton donor in the catalytic mechanism. Substrate is bound by residues 88 to 89, N167, N203, and 221 to 222; these read GN and ER. C230 functions as the Proton acceptor in the catalytic mechanism. 231–232 lines the substrate pocket; sequence GT.

This sequence belongs to the diaminopimelate epimerase family. In terms of assembly, homodimer.

It is found in the cytoplasm. It carries out the reaction (2S,6S)-2,6-diaminopimelate = meso-2,6-diaminopimelate. The protein operates within amino-acid biosynthesis; L-lysine biosynthesis via DAP pathway; DL-2,6-diaminopimelate from LL-2,6-diaminopimelate: step 1/1. Functionally, catalyzes the stereoinversion of LL-2,6-diaminopimelate (L,L-DAP) to meso-diaminopimelate (meso-DAP), a precursor of L-lysine and an essential component of the bacterial peptidoglycan. The chain is Diaminopimelate epimerase from Mycobacterium leprae (strain Br4923).